The following is a 621-amino-acid chain: Chaperone protein HscA homolog (621 aa).

The protein belongs to the heat shock protein 70 family.

In terms of biological role, chaperone involved in the maturation of iron-sulfur cluster-containing proteins. Has a low intrinsic ATPase activity which is markedly stimulated by HscB. This Polynucleobacter asymbioticus (strain DSM 18221 / CIP 109841 / QLW-P1DMWA-1) (Polynucleobacter necessarius subsp. asymbioticus) protein is Chaperone protein HscA homolog.